Reading from the N-terminus, the 198-residue chain is Inner membrane-spanning protein YciB (198 aa).

The next 5 helical transmembrane spans lie at 36–56, 67–87, 90–110, 135–155, and 162–182; these read IYSA…ALFI, LTLI…SETF, WKAP…HFIG, IAWI…AFTF, and FKVF…GIYL.

The protein belongs to the YciB family.

It is found in the cell inner membrane. In terms of biological role, plays a role in cell envelope biogenesis, maintenance of cell envelope integrity and membrane homeostasis. The chain is Inner membrane-spanning protein YciB from Pseudomonas fluorescens (strain Pf0-1).